Here is a 185-residue protein sequence, read N- to C-terminus: Adenine phosphoribosyltransferase (185 aa).

This sequence belongs to the purine/pyrimidine phosphoribosyltransferase family. In terms of assembly, homodimer.

It is found in the cytoplasm. The enzyme catalyses AMP + diphosphate = 5-phospho-alpha-D-ribose 1-diphosphate + adenine. It functions in the pathway purine metabolism; AMP biosynthesis via salvage pathway; AMP from adenine: step 1/1. In terms of biological role, catalyzes a salvage reaction resulting in the formation of AMP, that is energically less costly than de novo synthesis. The sequence is that of Adenine phosphoribosyltransferase from Pectobacterium atrosepticum (strain SCRI 1043 / ATCC BAA-672) (Erwinia carotovora subsp. atroseptica).